A 320-amino-acid polypeptide reads, in one-letter code: Thiamine thiazole synthase (320 aa).

Residues Cys82, 103-104 (EA), Gly111, and Val176 contribute to the substrate site. 2,3-didehydroalanine (Cys) is present on Cys209. Residues Asp211, His226, Met278, and 288-290 (RMG) each bind substrate.

Belongs to the THI4 family. In terms of assembly, homooctamer. It depends on Fe cation as a cofactor. In terms of processing, during the catalytic reaction, a sulfide is transferred from Cys-209 to a reaction intermediate, generating a dehydroalanine residue.

Its subcellular location is the cytoplasm. It localises to the nucleus. It catalyses the reaction [ADP-thiazole synthase]-L-cysteine + glycine + NAD(+) = [ADP-thiazole synthase]-dehydroalanine + ADP-5-ethyl-4-methylthiazole-2-carboxylate + nicotinamide + 3 H2O + 2 H(+). In terms of biological role, involved in biosynthesis of the thiamine precursor thiazole. Catalyzes the conversion of NAD and glycine to adenosine diphosphate 5-(2-hydroxyethyl)-4-methylthiazole-2-carboxylic acid (ADT), an adenylated thiazole intermediate. The reaction includes an iron-dependent sulfide transfer from a conserved cysteine residue of the protein to a thiazole intermediate. The enzyme can only undergo a single turnover, which suggests it is a suicide enzyme. May have additional roles in adaptation to various stress conditions and in DNA damage tolerance. In Fusarium oxysporum f. sp. lycopersici (strain 4287 / CBS 123668 / FGSC 9935 / NRRL 34936) (Fusarium vascular wilt of tomato), this protein is Thiamine thiazole synthase (sti35).